The following is a 295-amino-acid chain: ATP synthase subunit a (295 aa).

Helical transmembrane passes span 41 to 61 (KWSALTLFVALFVGGFLWLGF), 101 to 121 (YLTILFCFILVSNVMAVIPVA), 129 to 149 (IALPMILAAVSWFIFNIVGIR), 161 to 181 (LVPAPTAPLFVKVILAPIEFV), 191 to 211 (LAIRLFANMFAGHMLLLVFAL), 222 to 242 (FVFGLVSGLMAIALTLFELMI), and 244 to 264 (VLQAYIFTVLTAAYIGGAISS).

It belongs to the ATPase A chain family. In terms of assembly, F-type ATPases have 2 components, CF(1) - the catalytic core - and CF(0) - the membrane proton channel. CF(1) has five subunits: alpha(3), beta(3), gamma(1), delta(1), epsilon(1). CF(0) has three main subunits: a(1), b(2) and c(9-12). The alpha and beta chains form an alternating ring which encloses part of the gamma chain. CF(1) is attached to CF(0) by a central stalk formed by the gamma and epsilon chains, while a peripheral stalk is formed by the delta and b chains.

The protein localises to the cell membrane. Key component of the proton channel; it plays a direct role in the translocation of protons across the membrane. This chain is ATP synthase subunit a, found in Parafrankia sp. (strain EAN1pec).